An 800-amino-acid polypeptide reads, in one-letter code: Receptor-like protein 47 (800 aa).

The N-terminal stretch at 1–31 (MMHSSSVRRMITVKWSLCLIFCLTNSILVSA) is a signal peptide. At 32 to 759 (KHLCLPDQKD…QDEDKEEEDQ (728 aa)) the chain is on the extracellular side. N-linked (GlcNAc...) asparagine glycosylation is found at asparagine 66 and asparagine 102. LRR repeat units lie at residues 109–131 (QHLQKLVLGSNHLSGILPDSIGN), 133–156 (KRLKVLVLVNCNLFGKIPSSLGNL), 157–179 (SYLTHLDLSYNDFTSEGPDSMGN), 190–213 (LSSVTWIDLGDNQLKGMLPSNMSS), 214–238 (LSKLEAFDISGNSFSGTIPSSLFMI), 240–262 (SLILLHLGRNDFSGPFEIGNISS), 263–288 (PSNLQLLNIGRNNFNPDIVDLSIFSP), 294–311 (YLDVSGINLKISSTVSLP), 312–334 (SPIEYLGLLSCNISEFPKFLRNQ), 335–358 (TSLEYLDISANQIEGQVPEWLWSL), 360–383 (ELRYVNISHNSFNGFEGPADVIQG), 385–406 (RELLVLDISSNIFQDPFPLLPV), 407–430 (VSMNYLFSSNNRFSGEIPKTICEL), 431–453 (DNLRILVLSNNNFSGSIPRCFEN), 455–477 (HLYVLHLRNNNLSGIFPEEAISH), 479–500 (LQSFDVGHNLFSGELPKSLINC), 502–523 (DIEFLNVEDNRINDTFPSWLEL), 524–550 (LPNLQILVLRSNEFYGPIFSPGDSLSF), 551–574 (SRLRIFDISENRFTGVLPSDYFVG), 621–645 (FTIYKTIDVSGNRLEGDIPESIGLL), 646–669 (KEVIVLSMSNNAFTGHIPPSLSNL), 670–693 (SNLQSLDLSQNRLSGSIPGELGKL), and 695–718 (FLEWMNFSHNRLEGPIPETTQIQT). N-linked (GlcNAc...) asparagine glycosylation occurs at asparagine 155. N-linked (GlcNAc...) asparagine glycosylation occurs at asparagine 210. The N-linked (GlcNAc...) asparagine glycan is linked to asparagine 259. Asparagine 323 and asparagine 333 each carry an N-linked (GlcNAc...) asparagine glycan. The N-linked (GlcNAc...) asparagine glycan is linked to asparagine 365. Asparagine 442, asparagine 465, asparagine 499, and asparagine 514 each carry an N-linked (GlcNAc...) asparagine glycan. The N-linked (GlcNAc...) asparagine glycan is linked to asparagine 668. N-linked (GlcNAc...) asparagine glycosylation occurs at asparagine 700. Residues 760–780 (VFSWIAAAIGYVPGVVCGLTI) traverse the membrane as a helical segment. At 781 to 800 (GHILVSHKRDWFMRIVSFFT) the chain is on the cytoplasmic side.

It belongs to the RLP family.

The protein localises to the cell membrane. The chain is Receptor-like protein 47 from Arabidopsis thaliana (Mouse-ear cress).